We begin with the raw amino-acid sequence, 39 residues long: Large ribosomal subunit protein bL36 (39 aa).

Belongs to the bacterial ribosomal protein bL36 family.

In Oenococcus oeni (strain ATCC BAA-331 / PSU-1), this protein is Large ribosomal subunit protein bL36.